The chain runs to 866 residues: Replication factor C small subunit (866 aa).

A DOD-type homing endonuclease domain is found at 183-313; it reads WLGYFIGDGH…VTYALAGFGI (131 aa).

It belongs to the activator 1 small subunits family. RfcS subfamily. As to quaternary structure, heteromultimer composed of small subunits (RfcS) and large subunits (RfcL). In terms of processing, this protein undergoes a protein self splicing that involves a post-translational excision of the intervening region (intein) followed by peptide ligation.

In terms of biological role, part of the RFC clamp loader complex which loads the PCNA sliding clamp onto DNA. This is Replication factor C small subunit (rfcS) from Thermococcus kodakarensis (strain ATCC BAA-918 / JCM 12380 / KOD1) (Pyrococcus kodakaraensis (strain KOD1)).